Here is a 709-residue protein sequence, read N- to C-terminus: Nicastrin (709 aa).

Positions 1-33 (MATAGGGSGADPGSRGLLRLLSFCVLLAGLCRG) are cleaved as a signal peptide. Residues 34–669 (NSVERKIYIP…IFLIASKELE (636 aa)) lie on the Extracellular side of the membrane. Residues Asn45 and Asn55 are each glycosylated (N-linked (GlcNAc...) asparagine). 2 disulfide bridges follow: Cys50–Cys62 and Cys140–Cys159. Asn187, Asn200, and Asn204 each carry an N-linked (GlcNAc...) asparagine glycan. 2 disulfides stabilise this stretch: Cys195–Cys213 and Cys230–Cys248. Residues Asn264, Asn387, Asn417, Asn435, Asn464, Asn506, Asn530, Asn562, Asn573, Asn580, and Asn612 are each glycosylated (N-linked (GlcNAc...) asparagine). A disulfide bridge connects residues Cys586 and Cys620. The chain crosses the membrane as a helical span at residues 670 to 690 (LITLTVGFGILIFSLIVTYCI). Topologically, residues 691–709 (NAKADVLFIAPREPGAVSY) are cytoplasmic.

This sequence belongs to the nicastrin family. In terms of assembly, component of the gamma-secretase complex. The functional gamma-secretase complex is composed of at least four polypeptides: a presenilin homodimer (PSEN1 or PSEN2), nicastrin (NCSTN), APH1 (APH1A or APH1B) and PSENEN/PEN2. Binds to proteolytic processed C-terminal fragments C83 and C99 of the amyloid precursor protein (APP). Interacts with PSEN1 and PSEN2. In terms of processing, N-glycosylated. In terms of tissue distribution, detected in brain (at protein level). Widely expressed.

The protein resides in the membrane. The protein localises to the cytoplasmic vesicle membrane. It is found in the melanosome. Essential subunit of the gamma-secretase complex, an endoprotease complex that catalyzes the intramembrane cleavage of integral membrane proteins such as Notch receptors and APP (amyloid-beta precursor protein). The gamma-secretase complex plays a role in Notch and Wnt signaling cascades and regulation of downstream processes via its role in processing key regulatory proteins, and by regulating cytosolic CTNNB1 levels. This Homo sapiens (Human) protein is Nicastrin (NCSTN).